Reading from the N-terminus, the 125-residue chain is Glycine cleavage system H protein (125 aa).

The region spanning 22–104 is the Lipoyl-binding domain; it reads SYIIGITDFA…YDTGWILKLT (83 aa). An N6-lipoyllysine modification is found at Lys-63.

This sequence belongs to the GcvH family. In terms of assembly, the glycine cleavage system is composed of four proteins: P, T, L and H. Requires (R)-lipoate as cofactor.

Functionally, the glycine cleavage system catalyzes the degradation of glycine. The H protein shuttles the methylamine group of glycine from the P protein to the T protein. Is also involved in protein lipoylation via its role as an octanoyl/lipoyl carrier protein intermediate. The protein is Glycine cleavage system H protein of Listeria innocua serovar 6a (strain ATCC BAA-680 / CLIP 11262).